The sequence spans 130 residues: Small ribosomal subunit protein uS9 (130 aa).

The protein belongs to the universal ribosomal protein uS9 family.

The sequence is that of Small ribosomal subunit protein uS9 from Shewanella halifaxensis (strain HAW-EB4).